A 62-amino-acid chain; its full sequence is MARKCYVTGKSPKSGNNRSHALNKTKRTWGVNVQKVRILVDGKPKRVWVSARALKSGLVERV.

Residues 1-26 (MARKCYVTGKSPKSGNNRSHALNKTK) form a disordered region. Over residues 11-20 (SPKSGNNRSH) the composition is skewed to polar residues.

Belongs to the bacterial ribosomal protein bL28 family.

The chain is Large ribosomal subunit protein bL28 from Exiguobacterium sp. (strain ATCC BAA-1283 / AT1b).